We begin with the raw amino-acid sequence, 133 residues long: Phosphoribosyl-AMP cyclohydrolase (133 aa).

Residue Asp82 participates in Mg(2+) binding. Residue Cys83 participates in Zn(2+) binding. Asp84 and Asp86 together coordinate Mg(2+). Residues Cys100 and Cys107 each coordinate Zn(2+).

Belongs to the PRA-CH family. Homodimer. The cofactor is Mg(2+). Zn(2+) is required as a cofactor.

It localises to the cytoplasm. The catalysed reaction is 1-(5-phospho-beta-D-ribosyl)-5'-AMP + H2O = 1-(5-phospho-beta-D-ribosyl)-5-[(5-phospho-beta-D-ribosylamino)methylideneamino]imidazole-4-carboxamide. It functions in the pathway amino-acid biosynthesis; L-histidine biosynthesis; L-histidine from 5-phospho-alpha-D-ribose 1-diphosphate: step 3/9. In terms of biological role, catalyzes the hydrolysis of the adenine ring of phosphoribosyl-AMP. The protein is Phosphoribosyl-AMP cyclohydrolase of Aromatoleum aromaticum (strain DSM 19018 / LMG 30748 / EbN1) (Azoarcus sp. (strain EbN1)).